The following is a 253-amino-acid chain: UPF0246 protein Swit_4565 (253 aa).

The protein belongs to the UPF0246 family.

In Rhizorhabdus wittichii (strain DSM 6014 / CCUG 31198 / JCM 15750 / NBRC 105917 / EY 4224 / RW1) (Sphingomonas wittichii), this protein is UPF0246 protein Swit_4565.